A 260-amino-acid chain; its full sequence is Phosphatidate cytidylyltransferase (260 aa).

A run of 7 helical transmembrane segments spans residues 9–29, 46–66, 70–90, 102–122, 130–150, 172–192, and 196–216; these read IIAL…LMLF, MIKL…IIML, AGDW…FILL, FMDA…FMYF, LHYI…AYIF, FIGG…FVDF, and IWLL…GDLV.

Belongs to the CDS family.

The protein localises to the cell membrane. The catalysed reaction is a 1,2-diacyl-sn-glycero-3-phosphate + CTP + H(+) = a CDP-1,2-diacyl-sn-glycerol + diphosphate. It functions in the pathway phospholipid metabolism; CDP-diacylglycerol biosynthesis; CDP-diacylglycerol from sn-glycerol 3-phosphate: step 3/3. In Staphylococcus haemolyticus (strain JCSC1435), this protein is Phosphatidate cytidylyltransferase (cdsA).